The chain runs to 509 residues: Maturase K (509 aa).

Belongs to the intron maturase 2 family. MatK subfamily.

The protein resides in the plastid. It localises to the chloroplast. Usually encoded in the trnK tRNA gene intron. Probably assists in splicing its own and other chloroplast group II introns. The polypeptide is Maturase K (Cicer arietinum (Chickpea)).